The chain runs to 247 residues: Cell division protein ZapD (247 aa).

It belongs to the ZapD family. As to quaternary structure, interacts with FtsZ.

The protein localises to the cytoplasm. Cell division factor that enhances FtsZ-ring assembly. Directly interacts with FtsZ and promotes bundling of FtsZ protofilaments, with a reduction in FtsZ GTPase activity. This Klebsiella pneumoniae subsp. pneumoniae (strain ATCC 700721 / MGH 78578) protein is Cell division protein ZapD.